An 828-amino-acid chain; its full sequence is Chitin synthase 7 (828 aa).

6 helical membrane-spanning segments follow: residues 17–37, 57–77, 95–115, 444–464, 473–493, and 501–521; these read VIVGLVMLAAVLEWFLWVAAF, AVVVAILFVGFRAVFLPIMVV, VGLQWFAFWAFAGLLTIPWLF, FMQNTIRTTALLFFIMVLAIL, LPVGFIAISLGLNWLMMIYFG, and IWLYPLMFVLNPFFNWWYMVY. N-linked (GlcNAc...) asparagine glycosylation is present at Asn-615. 2 stretches are compositionally biased toward low complexity: residues 740-752 and 813-822; these read SLVSLGSSASNSN and SNNDPNNSNS. Disordered regions lie at residues 740-780 and 793-828; these read SLVS…LGRA and LEIGTSHGSSANRPALSRQASNNDPNNSNSGGHQQR. An N-linked (GlcNAc...) asparagine glycan is attached at Asn-818.

Belongs to the chitin synthase family. Class VII subfamily.

Its subcellular location is the membrane. It carries out the reaction [(1-&gt;4)-N-acetyl-beta-D-glucosaminyl](n) + UDP-N-acetyl-alpha-D-glucosamine = [(1-&gt;4)-N-acetyl-beta-D-glucosaminyl](n+1) + UDP + H(+). Functionally, polymerizes chitin, a structural polymer of the cell wall and septum, by transferring the sugar moiety of UDP-GlcNAc to the non-reducing end of the growing chitin polymer. Required for normal appressorial chitin content and for the normal formation and function of these infection structures. The sequence is that of Chitin synthase 7 from Pyricularia oryzae (strain 70-15 / ATCC MYA-4617 / FGSC 8958) (Rice blast fungus).